The sequence spans 338 residues: Nicotinate-nucleotide--dimethylbenzimidazole phosphoribosyltransferase (338 aa).

The Proton acceptor role is filled by Glu306.

Belongs to the CobT family.

The enzyme catalyses 5,6-dimethylbenzimidazole + nicotinate beta-D-ribonucleotide = alpha-ribazole 5'-phosphate + nicotinate + H(+). It functions in the pathway nucleoside biosynthesis; alpha-ribazole biosynthesis; alpha-ribazole from 5,6-dimethylbenzimidazole: step 1/2. Its function is as follows. Catalyzes the synthesis of alpha-ribazole-5'-phosphate from nicotinate mononucleotide (NAMN) and 5,6-dimethylbenzimidazole (DMB). The sequence is that of Nicotinate-nucleotide--dimethylbenzimidazole phosphoribosyltransferase from Cereibacter sphaeroides (strain KD131 / KCTC 12085) (Rhodobacter sphaeroides).